Reading from the N-terminus, the 730-residue chain is Polyribonucleotide nucleotidyltransferase (730 aa).

Positions 494 and 500 each coordinate Mg(2+). Residues 561-622 (PRIQTIQIDP…EAMNRAIQEI (62 aa)) enclose the KH domain. Positions 642 to 711 (GKIYTGRVTG…RSGKVRLSRK (70 aa)) constitute an S1 motif domain.

It belongs to the polyribonucleotide nucleotidyltransferase family. Mg(2+) serves as cofactor.

Its subcellular location is the cytoplasm. It catalyses the reaction RNA(n+1) + phosphate = RNA(n) + a ribonucleoside 5'-diphosphate. Involved in mRNA degradation. Catalyzes the phosphorolysis of single-stranded polyribonucleotides processively in the 3'- to 5'-direction. This chain is Polyribonucleotide nucleotidyltransferase, found in Opitutus terrae (strain DSM 11246 / JCM 15787 / PB90-1).